Reading from the N-terminus, the 218-residue chain is Oxygen regulatory protein NreC (218 aa).

The 118-residue stretch at K2–Y119 folds into the Response regulatory domain. D53 is modified (4-aspartylphosphate). In terms of domain architecture, HTH luxR-type spans S149–K214. The segment at residues N173–T192 is a DNA-binding region (H-T-H motif).

Post-translationally, phosphorylated by NreB.

The protein resides in the cytoplasm. Its function is as follows. Member of the two-component regulatory system NreB/NreC involved in the control of dissimilatory nitrate/nitrite reduction in response to oxygen. Phosphorylated NreC binds to a GC-rich palindromic sequence at the promoters of the nitrate (narGHJI) and nitrite (nir) reductase operons, as well as the putative nitrate transporter gene narT, and activates their expression. The protein is Oxygen regulatory protein NreC (nreC) of Staphylococcus epidermidis (strain ATCC 12228 / FDA PCI 1200).